The primary structure comprises 215 residues: Glutathione S-transferase F10 (215 aa).

A GST N-terminal domain is found at Val-2–Gly-81. Glutathione is bound by residues Ala-11–Ser-12, Gln-39–Arg-40, Lys-52–Ile-53, and Glu-65–Ser-66. The 128-residue stretch at Thr-88 to Val-215 folds into the GST C-terminal domain.

This sequence belongs to the GST superfamily. Phi family. Interacts with BAK1. In terms of tissue distribution, expressed in roots, stems, floral buds, mature flowers and leaves.

It is found in the cytoplasm. The protein resides in the cytosol. It carries out the reaction RX + glutathione = an S-substituted glutathione + a halide anion + H(+). In terms of biological role, in vitro, possesses glutathione S-transferase activity toward 1-chloro-2,4-dinitrobenzene (CDNB) and benzyl isothiocyanate (BITC). May be involved in the conjugation of reduced glutathione to a wide number of exogenous and endogenous hydrophobic electrophiles and have a detoxification role against certain herbicides. The polypeptide is Glutathione S-transferase F10 (Arabidopsis thaliana (Mouse-ear cress)).